The sequence spans 547 residues: Chaperonin GroEL (547 aa).

Residues 30-33 (TLGP), K51, 87-91 (DGTTT), G415, 479-481 (NAA), and D495 each bind ATP.

The protein belongs to the chaperonin (HSP60) family. As to quaternary structure, forms a cylinder of 14 subunits composed of two heptameric rings stacked back-to-back. Interacts with the co-chaperonin GroES.

Its subcellular location is the cytoplasm. It catalyses the reaction ATP + H2O + a folded polypeptide = ADP + phosphate + an unfolded polypeptide.. In terms of biological role, together with its co-chaperonin GroES, plays an essential role in assisting protein folding. The GroEL-GroES system forms a nano-cage that allows encapsulation of the non-native substrate proteins and provides a physical environment optimized to promote and accelerate protein folding. The sequence is that of Chaperonin GroEL from Cupriavidus metallidurans (strain ATCC 43123 / DSM 2839 / NBRC 102507 / CH34) (Ralstonia metallidurans).